A 628-amino-acid chain; its full sequence is tRNA uridine 5-carboxymethylaminomethyl modification enzyme MnmG (628 aa).

Residues 11 to 16 (GAGHAG), valine 123, and serine 178 contribute to the FAD site. 271–285 (GPRYCPSIETKIVTF) serves as a coordination point for NAD(+). Glutamine 368 contacts FAD.

It belongs to the MnmG family. In terms of assembly, homodimer. Heterotetramer of two MnmE and two MnmG subunits. FAD serves as cofactor.

The protein localises to the cytoplasm. NAD-binding protein involved in the addition of a carboxymethylaminomethyl (cmnm) group at the wobble position (U34) of certain tRNAs, forming tRNA-cmnm(5)s(2)U34. The sequence is that of tRNA uridine 5-carboxymethylaminomethyl modification enzyme MnmG from Bacteroides thetaiotaomicron (strain ATCC 29148 / DSM 2079 / JCM 5827 / CCUG 10774 / NCTC 10582 / VPI-5482 / E50).